The sequence spans 315 residues: tRNA-specific adenosine deaminase subunit tad3 (315 aa).

Residues 158–299 (KRIESILEDL…AELNHRYLAY (142 aa)) enclose the CMP/dCMP-type deaminase domain. Residues histidine 211, cysteine 253, and cysteine 256 each contribute to the Zn(2+) site.

It belongs to the cytidine and deoxycytidylate deaminase family. ADAT3 subfamily. As to quaternary structure, heterodimer with Tad2.

The protein localises to the cytoplasm. It localises to the nucleus. Its function is as follows. Structural subunit of tRNA-specific adenosine deaminase, which deaminates adenosine-34 (the first, also called wobble position of the anticodon) to inosine in many tRNAs. Inosine-34 allows the decoding of 3 different nucleotides at the third position of mRNA codons, as inosine is able to pair with U, C, and A. The wobble inosine tRNA modification is essential for cell cycle progression in the G1/S and G2/M transitions in fission yeast. The polypeptide is tRNA-specific adenosine deaminase subunit tad3 (tad3) (Schizosaccharomyces pombe (strain 972 / ATCC 24843) (Fission yeast)).